The sequence spans 513 residues: Putative thymidine phosphorylase (513 aa).

It belongs to the thymidine/pyrimidine-nucleoside phosphorylase family. Type 2 subfamily.

The catalysed reaction is thymidine + phosphate = 2-deoxy-alpha-D-ribose 1-phosphate + thymine. This is Putative thymidine phosphorylase from Rhodopseudomonas palustris (strain BisB18).